Consider the following 342-residue polypeptide: Isopentenyl-diphosphate delta-isomerase (342 aa).

Residue 12-13 (RK) participates in substrate binding. FMN contacts are provided by residues 71 to 73 (AMT), serine 101, and asparagine 129. 101-103 (SQR) contributes to the substrate binding site. Residue glutamine 163 participates in substrate binding. Residue glutamate 164 participates in Mg(2+) binding. FMN is bound by residues lysine 195, threonine 225, 272–274 (GIR), and 293–294 (AR).

It belongs to the IPP isomerase type 2 family. In terms of assembly, homooctamer. Dimer of tetramers. FMN serves as cofactor. It depends on NADPH as a cofactor. The cofactor is Mg(2+).

It is found in the cytoplasm. The enzyme catalyses isopentenyl diphosphate = dimethylallyl diphosphate. In terms of biological role, involved in the biosynthesis of isoprenoids. Catalyzes the 1,3-allylic rearrangement of the homoallylic substrate isopentenyl (IPP) to its allylic isomer, dimethylallyl diphosphate (DMAPP). The polypeptide is Isopentenyl-diphosphate delta-isomerase (Mycolicibacterium gilvum (strain PYR-GCK) (Mycobacterium gilvum (strain PYR-GCK))).